A 207-amino-acid chain; its full sequence is LexA repressor (207 aa).

The H-T-H motif DNA-binding region spans 28 to 48 (VREIGEAVGLASSSTVHGHLA). Active-site for autocatalytic cleavage activity residues include S129 and K167.

This sequence belongs to the peptidase S24 family. In terms of assembly, homodimer.

It catalyses the reaction Hydrolysis of Ala-|-Gly bond in repressor LexA.. Functionally, represses a number of genes involved in the response to DNA damage (SOS response), including recA and lexA. In the presence of single-stranded DNA, RecA interacts with LexA causing an autocatalytic cleavage which disrupts the DNA-binding part of LexA, leading to derepression of the SOS regulon and eventually DNA repair. This Brevibacillus brevis (strain 47 / JCM 6285 / NBRC 100599) protein is LexA repressor.